A 282-amino-acid chain; its full sequence is Parvulin-like PPIase (282 aa).

A signal peptide spans 1–20 (MKKLSVIFLSVSMLSSIAFG). Positions 138-231 (KEQIKVAHIL…FGWHIIKVLE (94 aa)) constitute a PpiC domain.

The protein belongs to the PpiC/parvulin rotamase family.

Its subcellular location is the cell outer membrane. It catalyses the reaction [protein]-peptidylproline (omega=180) = [protein]-peptidylproline (omega=0). This Rickettsia prowazekii (strain Madrid E) protein is Parvulin-like PPIase (plp).